The primary structure comprises 581 residues: Lipoprotein LpqB (581 aa).

The signal sequence occupies residues Met1–Ala23. Cys24 carries N-palmitoyl cysteine lipidation. Residue Cys24 is the site of S-diacylglycerol cysteine attachment.

This sequence belongs to the LpqB lipoprotein family.

The protein localises to the cell membrane. The sequence is that of Lipoprotein LpqB from Corynebacterium diphtheriae (strain ATCC 700971 / NCTC 13129 / Biotype gravis).